The chain runs to 499 residues: Long chain base biosynthesis protein 2b (499 aa).

Residues 5-25 (VPYVTAATTLFSFGLIFGFGH) form a helical membrane-spanning segment. K322 carries the N6-(pyridoxal phosphate)lysine modification.

It belongs to the class-II pyridoxal-phosphate-dependent aminotransferase family. Heterodimer with LCB1. Component of the serine palmitoyltransferase (SPT) complex, composed of LCB1 and LCB2. It depends on pyridoxal 5'-phosphate as a cofactor.

It is found in the endoplasmic reticulum membrane. The catalysed reaction is L-serine + hexadecanoyl-CoA + H(+) = 3-oxosphinganine + CO2 + CoA. The protein operates within lipid metabolism; sphingolipid metabolism. Functionally, serine palmitoyltransferase (SPT). The heterodimer formed with LCB1 constitutes the catalytic core. The chain is Long chain base biosynthesis protein 2b from Oryza sativa subsp. japonica (Rice).